A 679-amino-acid chain; its full sequence is HEAT repeat-containing protein 3 (679 aa).

Basic residues predominate over residues 1 to 11 (MGKSRTKRFKR). A disordered region spans residues 1–40 (MGKSRTKRFKRPQFSPIESCQAEAAAASNGTGDEEDDGPA). At serine 15 the chain carries Phosphoserine. HEAT repeat units lie at residues 38–69 (GPAAELLEKLQHPSAEVRECACAGLARLVQQR) and 74–110 (DLARRDAVRRLGPLLLDSSLAVRETAAGALRNLSACG). Serine 144 carries the post-translational modification Phosphoserine. Threonine 339 carries the post-translational modification Phosphothreonine.

It belongs to the nuclear import and ribosome assembly adapter family. In terms of assembly, component of a hexameric 5S RNP precursor complex, composed of 5S RNA, RRS1, RPF2/BXDC1, RPL5, RPL11 and HEATR3; this complex acts as a precursor for ribosome assembly.

In terms of biological role, plays a role in ribosome biogenesis and in nuclear import of the 60S ribosomal protein L5/large ribosomal subunit protein uL18 (RPL5). Required for proper erythrocyte maturation. The protein is HEAT repeat-containing protein 3 (Heatr3) of Mus musculus (Mouse).